A 350-amino-acid polypeptide reads, in one-letter code: MTYKITSLAGDGIGPEIMTSGLQVLEAVAKKYNHTFEIESHPFGGAGIDVAQDPIPSSTLKACQDADAILLGAIGGPKWDNAPKRPEDGLLALRKALGLFANIRPIQVPSSITHLSPLKKEIVENTDFVVVRELTGGLYFGEPKHWDESAAVDSLTYTRAEIERIIEKAFEIAATRNKKVTSVDKANVLASSKLWRKIAEEVASRHPDITLEHLYIDAAAMLMIQRPTTFDVIVTENLFGDILSDEASVITGSLGMLPSASHAENGPSLYEPIHGSAPDIANQNIANPMSMISSVSMMLRQSFSLFKEADAIDAAATRTMQAGFLTADLGGNTTTTDFTNEVLKQIEGGE.

76–87 (GPKWDNAPKRPE) serves as a coordination point for NAD(+). Substrate-binding residues include Arg94, Arg104, Arg132, and Asp217. Asp217, Asp241, and Asp245 together coordinate Mg(2+). Residue 275–287 (GSAPDIANQNIAN) coordinates NAD(+).

It belongs to the isocitrate and isopropylmalate dehydrogenases family. LeuB type 1 subfamily. In terms of assembly, homodimer. Mg(2+) serves as cofactor. Mn(2+) is required as a cofactor.

It is found in the cytoplasm. The catalysed reaction is (2R,3S)-3-isopropylmalate + NAD(+) = 4-methyl-2-oxopentanoate + CO2 + NADH. It functions in the pathway amino-acid biosynthesis; L-leucine biosynthesis; L-leucine from 3-methyl-2-oxobutanoate: step 3/4. Functionally, catalyzes the oxidation of 3-carboxy-2-hydroxy-4-methylpentanoate (3-isopropylmalate) to 3-carboxy-4-methyl-2-oxopentanoate. The product decarboxylates to 4-methyl-2 oxopentanoate. This is 3-isopropylmalate dehydrogenase from Listeria monocytogenes serovar 1/2a (strain ATCC BAA-679 / EGD-e).